Reading from the N-terminus, the 287-residue chain is Leucine-rich repeat-containing protein 72 (287 aa).

4 LRR repeats span residues 46–67 (DVFE…SRFK), 68–89 (KLKY…TRNY), 90–111 (CLTE…HYLP), and 112–133 (SLHI…VKEL). Positions 147 to 185 (NPLCQYNLYRLYIIYHLPGVELLDRNQVTEKERRSMITI) constitute an LRRCT domain.

This chain is Leucine-rich repeat-containing protein 72 (LRRC72), found in Homo sapiens (Human).